A 461-amino-acid polypeptide reads, in one-letter code: Protein transport protein HofB homolog (461 aa).

222–229 (GPTGSGKT) lines the ATP pocket.

It belongs to the GSP E family.

This chain is Protein transport protein HofB homolog (hofB), found in Escherichia coli (strain K12).